The sequence spans 194 residues: Casparian strip membrane protein 2 (194 aa).

The Cytoplasmic portion of the chain corresponds to 1–32; it reads MSTTIDIPESSKVVKGKGVVAAPLRPGGWKKG. A helical membrane pass occupies residues 33 to 53; the sequence is VAIMDFILRLGAIAAALGAAA. Over 54 to 82 the chain is Extracellular; the sequence is TMGTSDQTLPFFTQFFQFEASYDSFTTFQ. The chain crosses the membrane as a helical span at residues 83–103; sequence FFVITMALVGGYLVLSLPFSV. Residues 104–115 lie on the Cytoplasmic side of the membrane; that stretch reads VAIIRPHAVGPR. Residues 116–136 traverse the membrane as a helical segment; the sequence is LFLIILDTVFLTLATASAASA. Over 137–168 the chain is Extracellular; sequence AAVVYLAHNGDQDTNWLAICNQFGDFCAQTSS. The chain crosses the membrane as a helical span at residues 169 to 189; sequence AVVSSFVAVVVFVLLIVMSAL. Residues 190–194 are Cytoplasmic-facing; the sequence is AMGKP.

The protein belongs to the Casparian strip membrane proteins (CASP) family. As to quaternary structure, homodimer and heterodimers.

It is found in the cell membrane. Regulates membrane-cell wall junctions and localized cell wall deposition. Required for establishment of the Casparian strip membrane domain (CSD) and the subsequent formation of Casparian strips, a cell wall modification of the root endodermis that determines an apoplastic barrier between the intraorganismal apoplasm and the extraorganismal apoplasm and prevents lateral diffusion. The sequence is that of Casparian strip membrane protein 2 from Vigna unguiculata (Cowpea).